A 301-amino-acid chain; its full sequence is 4-hydroxy-tetrahydrodipicolinate synthase (301 aa).

Threonine 57 is a pyruvate binding site. Residue tyrosine 145 is the Proton donor/acceptor of the active site. The active-site Schiff-base intermediate with substrate is the lysine 173. Isoleucine 213 contributes to the pyruvate binding site.

Belongs to the DapA family. As to quaternary structure, homotetramer; dimer of dimers.

It localises to the cytoplasm. The enzyme catalyses L-aspartate 4-semialdehyde + pyruvate = (2S,4S)-4-hydroxy-2,3,4,5-tetrahydrodipicolinate + H2O + H(+). Its pathway is amino-acid biosynthesis; L-lysine biosynthesis via DAP pathway; (S)-tetrahydrodipicolinate from L-aspartate: step 3/4. In terms of biological role, catalyzes the condensation of (S)-aspartate-beta-semialdehyde [(S)-ASA] and pyruvate to 4-hydroxy-tetrahydrodipicolinate (HTPA). This Corynebacterium diphtheriae (strain ATCC 700971 / NCTC 13129 / Biotype gravis) protein is 4-hydroxy-tetrahydrodipicolinate synthase.